The chain runs to 152 residues: Calmodulin (152 aa).

Alanine 2 is modified (N-acetylalanine). EF-hand domains are found at residues 10-45 (EQIAEFKEAFSLFDKDGDGSITTKELGTVMRSLGQN), 46-81 (PTEAELQDMINEVDADGNGNIDFPEFLTMMARKMQD), 83-118 (DTEEEIREAFKVFDKDGNGYISAAELRHVMTSLGEK), and 119-152 (LTNEEVDEMIREADLDGDGQVNYDEFVKMMIVRN). Positions 23, 25, 27, 29, 34, 59, 61, 63, 65, 70, 96, 98, 100, 102, 107, 132, 134, 136, 138, and 143 each coordinate Ca(2+).

Belongs to the calmodulin family. As to quaternary structure, interacts with cmbB, numA/nucleomorphin, pgkA/phosphoglycerate kinase, and thyB/thymidine kinase in the presence of Ca(2+). Interacts with dwwA in the absence of Ca(2+). In terms of processing, the N-terminus is blocked. Post-translationally, trimethylation of Lys-118 observed in other calmodulins is absent here.

It is found in the contractile vacuole. Its function is as follows. Calmodulin mediates the control of a large number of enzymes, ion channels and other proteins by Ca(2+). Among the enzymes to be stimulated by the calmodulin-Ca(2+) complex are a number of protein kinases and phosphatases. In Dictyostelium discoideum (Social amoeba), this protein is Calmodulin (calA).